The primary structure comprises 119 residues: Large ribosomal subunit protein bL19 (119 aa).

This sequence belongs to the bacterial ribosomal protein bL19 family.

Functionally, this protein is located at the 30S-50S ribosomal subunit interface and may play a role in the structure and function of the aminoacyl-tRNA binding site. The protein is Large ribosomal subunit protein bL19 of Leuconostoc mesenteroides subsp. mesenteroides (strain ATCC 8293 / DSM 20343 / BCRC 11652 / CCM 1803 / JCM 6124 / NCDO 523 / NBRC 100496 / NCIMB 8023 / NCTC 12954 / NRRL B-1118 / 37Y).